The following is a 35-amino-acid chain: Cupiennin-1b (35 aa).

At Glu-35 the chain carries Glutamic acid 1-amide.

It belongs to the cationic peptide 04 (cupiennin) family. 01 subfamily. Expressed by the venom gland.

Its subcellular location is the secreted. Its function is as follows. Has antimicrobial activity against E.coli, E.faecalis, P.aeruginosa, and S.aureus. Has insecticidal and hemolytic activities. Probably acts by disturbing membrane function with its amphipathic structure. In Cupiennius salei (American wandering spider), this protein is Cupiennin-1b.